Reading from the N-terminus, the 66-residue chain is Toxin Boma6a (66 aa).

The 63-residue stretch at 2–64 (RDAYIAQNYN…VPIKVEGKCH (63 aa)) folds into the LCN-type CS-alpha/beta domain. 4 disulfide bridges follow: Cys-12-Cys-63, Cys-16-Cys-36, Cys-22-Cys-46, and Cys-26-Cys-48.

This sequence belongs to the long (4 C-C) scorpion toxin superfamily. Sodium channel inhibitor family. Alpha subfamily. As to expression, expressed by the venom gland.

It localises to the secreted. Functionally, alpha toxins bind voltage-independently at site-3 of sodium channels (Nav) and inhibit the inactivation of the activated channels, thereby blocking neuronal transmission. This Buthus occitanus mardochei (Moroccan scorpion) protein is Toxin Boma6a.